The following is an 83-amino-acid chain: Gas vesicle protein G2 (83 aa).

Belongs to the gas vesicle GvpG family. As to quaternary structure, gvpF to GvpM interact with each other in vitro, and may form multi-subunit complex(es).

It localises to the gas vesicle. Proteins GvpF to GvpM might be involved in nucleating gas vesicle formation. A minor component of the gas vesicle. Gas vesicles are hollow, gas filled proteinaceous nanostructures found in several microbial planktonic microorganisms. They allow positioning of halobacteria at the optimal depth for growth in the poorly aerated, shallow brine pools of their habitat. Functionally, expression of 2 c-vac DNA fragments containing 2 divergently transcribed regions (gvpE-gvpF-gvpG-gvpH-gvpI-gvpJ-gvpK-gvpL-gvpM and gvpA-gvpC-gvpN-gvpO) allows H.volcanii to produce gas vesicles. This Halobacterium salinarum (strain ATCC 700922 / JCM 11081 / NRC-1) (Halobacterium halobium) protein is Gas vesicle protein G2.